The sequence spans 466 residues: Asparagine--tRNA ligase (466 aa).

This sequence belongs to the class-II aminoacyl-tRNA synthetase family. Homodimer.

It localises to the cytoplasm. The enzyme catalyses tRNA(Asn) + L-asparagine + ATP = L-asparaginyl-tRNA(Asn) + AMP + diphosphate + H(+). The sequence is that of Asparagine--tRNA ligase from Aliivibrio fischeri (strain ATCC 700601 / ES114) (Vibrio fischeri).